The sequence spans 119 residues: Anther-specific protein BCP1 (119 aa).

The signal sequence occupies residues Met-1–Ala-23. Residues Ala-24 to Pro-42 are compositionally biased toward low complexity. A disordered region spans residues Ala-24–Ser-95. The Extracellular portion of the chain corresponds to Ala-24–Ala-98. A compositionally biased stretch (acidic residues) spans Thr-56–Val-69. The segment covering Gly-82–Ser-95 has biased composition (low complexity). Residues Ala-99–Phe-118 traverse the membrane as a helical segment. Position 119 (Phe-119) is a topological domain, cytoplasmic.

Expressed in mature pollen grains, developing microspores and tapetal cells.

The protein localises to the membrane. Functionally, required for pollen fertility and development. Active in both diploid tapetum and haploid microspores. Major pollen protein. This is Anther-specific protein BCP1 (BCP1) from Brassica campestris (Field mustard).